The sequence spans 148 residues: Calmodulin-4 (148 aa).

4 EF-hand domains span residues 8-43 (EEVAEFQAAFNRFDKNKDGHISVEELGDVMKQLGKN), 44-79 (LPEKDLKALISKLDTDGDGKISFEEFLTAIEKYKKG), 80-115 (HRAGELRAVFNVLDQNGDGYITVDELKESLSKLGES), and 116-148 (LSQEELEDMIRVADVDQDGKVKYEEFVRLHVEN). Positions 21, 23, 25, 27, 32, 57, 59, 61, 63, 68, 93, 95, 97, 99, and 104 each coordinate Ca(2+).

Implicated in the early stage of ectopic ossification. The chain is Calmodulin-4 (Calm4) from Mus musculus (Mouse).